Reading from the N-terminus, the 392-residue chain is Formate-dependent phosphoribosylglycinamide formyltransferase (392 aa).

N(1)-(5-phospho-beta-D-ribosyl)glycinamide contacts are provided by residues 22–23 and E82; that span reads EL. ATP is bound by residues R114, K155, 160–165, 195–198, and E203; these read SSGKGQ and EGVV. Residues 119 to 308 enclose the ATP-grasp domain; it reads RLAAEELGLP…EFALHVRAFL (190 aa). Mg(2+) contacts are provided by E267 and E279. Residues D286, K355, and 362 to 363 contribute to the N(1)-(5-phospho-beta-D-ribosyl)glycinamide site; that span reads RR.

Belongs to the PurK/PurT family. Homodimer.

The catalysed reaction is N(1)-(5-phospho-beta-D-ribosyl)glycinamide + formate + ATP = N(2)-formyl-N(1)-(5-phospho-beta-D-ribosyl)glycinamide + ADP + phosphate + H(+). It functions in the pathway purine metabolism; IMP biosynthesis via de novo pathway; N(2)-formyl-N(1)-(5-phospho-D-ribosyl)glycinamide from N(1)-(5-phospho-D-ribosyl)glycinamide (formate route): step 1/1. Involved in the de novo purine biosynthesis. Catalyzes the transfer of formate to 5-phospho-ribosyl-glycinamide (GAR), producing 5-phospho-ribosyl-N-formylglycinamide (FGAR). Formate is provided by PurU via hydrolysis of 10-formyl-tetrahydrofolate. The chain is Formate-dependent phosphoribosylglycinamide formyltransferase from Salmonella arizonae (strain ATCC BAA-731 / CDC346-86 / RSK2980).